The chain runs to 393 residues: MLVFIFLAVTLSSENESSSQTNDCAHLIQKCLIDANGCEQSWRSMEDTCLTPGDSCKINNSLHCNLSIQALVEKNFQFKECLCMDDLHCTVNKLFGKKCTNKTDNMEKDNKDKWNLTTTPFYHGFKQMQSCLEVTEACVGDVVCNAQLALYLKACSANGNLCDVKHCQAAIRFFYQNMPFNTAQMLAFCDCAQSDIPCQQSKETLHSKPCALNIVPPPTCLSVIHTCRNDELCRTHYRTFQTECWPHITGKCHEDETCISMLGKQDLTCSGSESCRAAFLGTFGTVLQVPCACRGVTQAEEHVCMIFQHMLHSKSCFNYPTPNVKDISSYEKKNSKEITLTGFNSFFNGELLYVVVCMAVTCGILFLVMLKLRIQSEKRDPSSIEIAGGVIIQ.

The signal sequence occupies residues 1–19 (MLVFIFLAVTLSSENESSS). The Extracellular segment spans residues 20–349 (QTNDCAHLIQ…LTGFNSFFNG (330 aa)). N-linked (GlcNAc...) asparagine glycans are attached at residues asparagine 59, asparagine 65, asparagine 101, and asparagine 115. Disulfide bonds link cysteine 131–cysteine 189, cysteine 138–cysteine 144, cysteine 155–cysteine 167, cysteine 162–cysteine 210, cysteine 191–cysteine 198, cysteine 220–cysteine 291, cysteine 227–cysteine 233, cysteine 244–cysteine 275, cysteine 252–cysteine 258, cysteine 269–cysteine 316, and cysteine 293–cysteine 304. The segment at 149–228 (ALYLKACSAN…TCLSVIHTCR (80 aa)) is required for interaction with GDF15. The helical transmembrane segment at 350–370 (ELLYVVVCMAVTCGILFLVML) threads the bilayer. Topologically, residues 371 to 393 (KLRIQSEKRDPSSIEIAGGVIIQ) are cytoplasmic.

It belongs to the GDNFR family. Interacts (via the extracellular domain) with GDF15 and RET; receptor of GDF15, mediates cellular signaling through interaction with RET after GDF15-binding. Interaction with RET requires previous GDF15-binding. Post-translationally, cleaved and inactivated by MMP14, inhibiting the GDF15-GFRAL aversive response. As to expression, expressed in the brainstem, restricted to cells in the area postrema and the immediately adjacent region of the nucleus tractus solitarius.

The protein localises to the cell membrane. Its activity is regulated as follows. Specifically inhibited by 3P10 monoclonal antibody. Strongly activated by LY3463251, a long-acting and stable agonist composed of GDF15 conjugated monomeric human IgG4 Fc. Functionally, brainstem-restricted receptor for GDF15 hormone, which triggers an aversive response, characterized by nausea, vomiting, and/or loss of appetite in response to various stresses. The aversive response is both required to reduce continuing exposure to those stresses at the time of exposure and to promote avoidance behavior in the future. The GDF15-GFRAL aversive response is triggered by stresses, such as anticancer drugs (camptothecin or cisplatin), cancers or drugs such as metformin. Upon interaction with its ligand, GDF15, mediates the GDF15-induced autophosphorylation and activation of the RET tyrosine kinase receptor, leading to activation of MAPK- and AKT- signaling pathways. Ligand-binding activates GFRAL-expressing neurons localized in the area postrema and nucleus tractus solitarius of the brainstem. The GDF15-GFRAL signal induces expression of genes involved in metabolism, such as lipid metabolism in adipose tissues. The protein is GDNF family receptor alpha-like (Gfral) of Mus musculus (Mouse).